Reading from the N-terminus, the 395-residue chain is Acetylornithine aminotransferase (395 aa).

Residues 117-118 and Phe-144 contribute to the pyridoxal 5'-phosphate site; that span reads GA. Arg-147 contributes to the N(2)-acetyl-L-ornithine binding site. Residue 230-233 participates in pyridoxal 5'-phosphate binding; sequence DEVQ. Lys-259 bears the N6-(pyridoxal phosphate)lysine mark. A N(2)-acetyl-L-ornithine-binding site is contributed by Ser-285. Residue Thr-286 coordinates pyridoxal 5'-phosphate.

Belongs to the class-III pyridoxal-phosphate-dependent aminotransferase family. ArgD subfamily. As to quaternary structure, homodimer. It depends on pyridoxal 5'-phosphate as a cofactor.

It localises to the cytoplasm. The catalysed reaction is N(2)-acetyl-L-ornithine + 2-oxoglutarate = N-acetyl-L-glutamate 5-semialdehyde + L-glutamate. The protein operates within amino-acid biosynthesis; L-arginine biosynthesis; N(2)-acetyl-L-ornithine from L-glutamate: step 4/4. The polypeptide is Acetylornithine aminotransferase (Methanosarcina acetivorans (strain ATCC 35395 / DSM 2834 / JCM 12185 / C2A)).